The chain runs to 345 residues: UPF0284 protein STK_21430 (345 aa).

It belongs to the UPF0284 family.

The protein is UPF0284 protein STK_21430 of Sulfurisphaera tokodaii (strain DSM 16993 / JCM 10545 / NBRC 100140 / 7) (Sulfolobus tokodaii).